Consider the following 263-residue polypeptide: MEIFPVFGISKISNFIANNDCRYYIDTEHQKIISDEINRQMDETVLLTNILSVEVVNDNEMYHLIPHRLSTIILCISSVGGCVISIDNDINDKNILTFPIDHAVIISPLSKCVVVSKGPTTILVVKADIPSKRLVTSFTNDILYVNNLSLINYLPLSVFIIRRVTDYLDRHICDQIFANNKWYSIITIDDKQYPIPSNCIGMSSAKYINSSIEQDTLIHVCNLEHPFDLVYKKMQSYNSVPIKEQILYGRIDNINMSISISVD.

This sequence belongs to the orthopoxvirus OPG165 family.

The polypeptide is Protein OPG165 (OPG165) (Bos taurus (Bovine)).